The primary structure comprises 219 residues: Dynein light chain Tctex-type 4 (219 aa).

The tract at residues 1–84 (MACRTLPSRR…RRPSLGPVPP (84 aa)) is disordered. Over residues 9 to 20 (RRQEEETTKDLA) the composition is skewed to basic and acidic residues. Ser64 carries the post-translational modification Phosphoserine.

It belongs to the dynein light chain Tctex-type family. Interacts with ENG/endoglin, TGFBR2 and TGFBR3. Interacts with PPP1CC.

Its subcellular location is the cell projection. The protein localises to the cilium. The protein resides in the flagellum. It localises to the cytoplasmic vesicle. It is found in the secretory vesicle. Its subcellular location is the acrosome. The protein localises to the cytoplasm. The protein resides in the cytoskeleton. It localises to the cilium axoneme. It is found in the nucleus. Its subcellular location is the microtubule organizing center. This Mus musculus (Mouse) protein is Dynein light chain Tctex-type 4 (Dynlt4).